The following is a 348-amino-acid chain: Flagellar P-ring protein (348 aa).

Positions 1 to 16 (MRVLTIFLLFMTSIFA) are cleaved as a signal peptide.

The protein belongs to the FlgI family. In terms of assembly, the basal body constitutes a major portion of the flagellar organelle and consists of four rings (L,P,S, and M) mounted on a central rod.

It localises to the periplasm. It is found in the bacterial flagellum basal body. In terms of biological role, assembles around the rod to form the L-ring and probably protects the motor/basal body from shearing forces during rotation. The sequence is that of Flagellar P-ring protein from Campylobacter jejuni subsp. jejuni serotype O:6 (strain 81116 / NCTC 11828).